A 743-amino-acid chain; its full sequence is Coiled-coil domain-containing protein 30 (743 aa).

Basic and acidic residues-rich tracts occupy residues 1-22 and 133-193; these read MSQEKNEMFESEWSKEREREKQ and SPKE…MKPE. Disordered regions lie at residues 1–25, 114–193, 208–233, and 695–715; these read MSQEKNEMFESEWSKEREREKQLAS, ENIC…MKPE, SLLQSQSSGDSSDDSGAQYPSSGDKL, and SKEAMASSKSPEKSPENLVCS. 2 coiled-coil regions span residues 21 to 98 and 165 to 580; these read KQLA…QLNH and REGQ…LIHS. The span at 208 to 223 shows a compositional bias: low complexity; it reads SLLQSQSSGDSSDDSG.

Belongs to the prefoldin subunit beta family.

In Macaca fascicularis (Crab-eating macaque), this protein is Coiled-coil domain-containing protein 30 (CCDC30).